Reading from the N-terminus, the 146-residue chain is Ribonuclease H (146 aa).

One can recognise an RNase H type-1 domain in the interval 4–145 (ELNKVVVYTD…ADMLARSQIV (142 aa)). Residues aspartate 13, glutamate 51, aspartate 73, and aspartate 137 each contribute to the Mg(2+) site.

The protein belongs to the RNase H family. Monomer. The cofactor is Mg(2+).

The protein localises to the cytoplasm. The enzyme catalyses Endonucleolytic cleavage to 5'-phosphomonoester.. Its function is as follows. Endonuclease that specifically degrades the RNA of RNA-DNA hybrids. The polypeptide is Ribonuclease H (Ehrlichia ruminantium (strain Gardel)).